The sequence spans 585 residues: Probable monoterpene synthase MTS1, chloroplastic (585 aa).

Residues 1–29 (MSLSGVPLSAGLAPSPSNKPTNGKGQNIV) are disordered. The transit peptide at 1–31 (MSLSGVPLSAGLAPSPSNKPTNGKGQNIVRR) directs the protein to the chloroplast. The segment covering 15 to 25 (SPSNKPTNGKG) has biased composition (polar residues). Arg-298, Asp-335, Asp-339, Arg-476, and Asp-479 together coordinate (2E)-geranyl diphosphate. Mg(2+) is bound by residues Asp-335 and Asp-339. The short motif at 335–339 (DDIYD) is the DDXXD motif element. Asp-479, Thr-483, and Glu-487 together coordinate Mg(2+).

This sequence belongs to the terpene synthase family. Tpsb subfamily. Mg(2+) serves as cofactor. The cofactor is Mn(2+). As to expression, expressed in trichomes. Detected in flowers, but not in leaves.

Its subcellular location is the plastid. It localises to the chloroplast. The chain is Probable monoterpene synthase MTS1, chloroplastic from Humulus lupulus (European hop).